Consider the following 530-residue polypeptide: MSVDTYTETTKIDKLLKKPTSHFQLSTTQLYNKILDNNEGVLTELGAVNASTGKYTGRSPKDKFFVSEPSYRDNIDWGEINQPIDEETFLKLYHKVLDYLDKKDELYVFKGYAGSDKDTMLKLTVINELAWHNLFAKNMFIRPESKEEATKIKPNFTIVSAPHFKADPEVDGTKSETFVIISFKHKVILIGGTEYAGEMKKGIFSVMNYLLPMQDIMSMHCSANVGEKGDVALFFGLSGTGKTTLSADPHRKLIGDDEHGWNKNGVFNIEGGCYAKAINLSKEKEPQIFDAIKYGAILENTVVAEDGSVDFEDNRYTENTRAAYPINHIDNIVVPSKAAHPNTIIFLTADAFGVIPPISKLNKDQAMYHFLSGFTSKLAGTERGVTEPEPSFSTCFGAPFFPLHPTVYADLLGELIDLHDVDVYLVNTGWTGGKYGVGRRISLHYTRQMVNQAISGKLKNAEYTKDSTFGLSIPVKIEDVPKTILNPINAWSDKEKYKAQAEDLIQRFEKNFEKFGEKVEHIAEKGSFNK.

Residues arginine 58, tyrosine 195, and lysine 201 each contribute to the substrate site. Residues lysine 201, histidine 220, and 236 to 244 (GLSGTGKTT) contribute to the ATP site. Mn(2+) is bound by residues lysine 201 and histidine 220. Residue aspartate 257 participates in Mn(2+) binding. ATP-binding positions include glutamate 285, arginine 321, 440 to 441 (RI), and threonine 446. Position 321 (arginine 321) interacts with substrate.

It belongs to the phosphoenolpyruvate carboxykinase (ATP) family. Mn(2+) is required as a cofactor.

The protein resides in the cytoplasm. It carries out the reaction oxaloacetate + ATP = phosphoenolpyruvate + ADP + CO2. It functions in the pathway carbohydrate biosynthesis; gluconeogenesis. In terms of biological role, involved in the gluconeogenesis. Catalyzes the conversion of oxaloacetate (OAA) to phosphoenolpyruvate (PEP) through direct phosphoryl transfer between the nucleoside triphosphate and OAA. The polypeptide is Phosphoenolpyruvate carboxykinase (ATP) (Staphylococcus aureus (strain MSSA476)).